The primary structure comprises 292 residues: Ornithine decarboxylase antizyme (292 aa).

This sequence belongs to the ODC antizyme family. As to quaternary structure, interacts with ODC/SPE1 and thereby sterically blocks ODC homodimerization.

Functionally, ornithine decarboxylase (ODC) antizyme protein that negatively regulates ODC activity and intracellular polyamine biosynthesis in response to increased intracellular polyamine levels. Binds to ODC/SPE1 monomers, inhibiting the assembly of the functional ODC homodimer, and targets the monomers for ubiquitin-independent proteolytic destruction by the 26S proteasome. The polypeptide is Ornithine decarboxylase antizyme (OAZ1) (Saccharomyces cerevisiae (strain ATCC 204508 / S288c) (Baker's yeast)).